The sequence spans 344 residues: Ribosomal large subunit pseudouridine synthase D (344 aa).

The interval 1-29 (MMNRLINEQDGRNYSAKPDSSAAGSQENE) is disordered. The S4 RNA-binding domain maps to 43-116 (LRLDQALAQL…IPLKILFEDD (74 aa)). D164 is an active-site residue.

The protein belongs to the pseudouridine synthase RluA family.

The protein localises to the cytoplasm. The enzyme catalyses uridine(1911/1915/1917) in 23S rRNA = pseudouridine(1911/1915/1917) in 23S rRNA. In terms of biological role, responsible for synthesis of pseudouridine from uracil at positions 1911, 1915 and 1917 in 23S ribosomal RNA. This Nitrosomonas europaea (strain ATCC 19718 / CIP 103999 / KCTC 2705 / NBRC 14298) protein is Ribosomal large subunit pseudouridine synthase D (rluD).